Reading from the N-terminus, the 336-residue chain is P2Y purinoceptor 13 (336 aa).

Residues 1–32 (MLGTVNTTGMQGFNKSERCPRDTRMTQLLFPV) lie on the Extracellular side of the membrane. Residues Asn6 and Asn14 are each glycosylated (N-linked (GlcNAc...) asparagine). Residues 33–53 (LYTVVFFTGVLLNTLALWVFI) traverse the membrane as a helical segment. Over 54-60 (HIPSNST) the chain is Cytoplasmic. The chain crosses the membrane as a helical span at residues 61 to 81 (FIIYLKNTLVADLIMTLMLPF). The Extracellular segment spans residues 82 to 100 (KILSDSRLAPWQLRGFVCT). The cysteines at positions 99 and 176 are disulfide-linked. Residues 101–121 (FSSVVFYETMYVGIMMLGLIA) form a helical membrane-spanning segment. Residues 122–144 (FDRFLKIVVPFRKTFVKKTAFAK) are Cytoplasmic-facing. The chain crosses the membrane as a helical span at residues 145 to 165 (IVSISIWLLMFLISLPNMILN). Over 166–193 (KEATASTVKKCASLKSPLGLLWHQVVSH) the chain is Extracellular. The helical transmembrane segment at 194-214 (TCQFIFWTVFILMLLFYTVIA) threads the bilayer. The Cytoplasmic portion of the chain corresponds to 215 to 237 (KKVYDSYRKFKSRDSKHKRLEAK). The helical transmembrane segment at 238–258 (VFIVMAVFFVCFAPFHFVRVP) threads the bilayer. The Extracellular portion of the chain corresponds to 259–281 (YTHSQTTNKTDCRLENQLFLAKE). The N-linked (GlcNAc...) asparagine glycan is linked to Asn266. A helical transmembrane segment spans residues 282-302 (STLFLATTNICMDPLIYIILC). Residues 303 to 336 (KKFTRKVPCMRWRTKTAASSDEHHSSQTDNITLS) lie on the Cytoplasmic side of the membrane.

It belongs to the G-protein coupled receptor 1 family. Highest levels in spleen, liver brain and kidney. Lower but significant level are also detected in intestine, stomach, skeletal muscle, testis, heart and lung.

It localises to the cell membrane. In terms of biological role, receptor for ADP. Coupled to G(i)-proteins. May play a role in hematopoiesis and the immune system. The protein is P2Y purinoceptor 13 (P2ry13) of Rattus norvegicus (Rat).